The primary structure comprises 433 residues: Glutamyl-tRNA reductase (433 aa).

Substrate-binding positions include 49-52 (TCNR), serine 109, 114-116 (EGQ), and glutamine 120. Cysteine 50 acts as the Nucleophile in catalysis. 189–194 (GAGKMS) contacts NADP(+).

This sequence belongs to the glutamyl-tRNA reductase family. Homodimer.

The catalysed reaction is (S)-4-amino-5-oxopentanoate + tRNA(Glu) + NADP(+) = L-glutamyl-tRNA(Glu) + NADPH + H(+). The protein operates within porphyrin-containing compound metabolism; protoporphyrin-IX biosynthesis; 5-aminolevulinate from L-glutamyl-tRNA(Glu): step 1/2. It participates in porphyrin-containing compound metabolism; chlorophyll biosynthesis. Catalyzes the NADPH-dependent reduction of glutamyl-tRNA(Glu) to glutamate 1-semialdehyde (GSA). The chain is Glutamyl-tRNA reductase from Acaryochloris marina (strain MBIC 11017).